The following is a 101-amino-acid chain: Small ribosomal subunit protein uS14 (101 aa).

It belongs to the universal ribosomal protein uS14 family. In terms of assembly, part of the 30S ribosomal subunit. Contacts proteins S3 and S10.

Functionally, binds 16S rRNA, required for the assembly of 30S particles and may also be responsible for determining the conformation of the 16S rRNA at the A site. The polypeptide is Small ribosomal subunit protein uS14 (Kocuria rhizophila (strain ATCC 9341 / DSM 348 / NBRC 103217 / DC2201)).